Consider the following 563-residue polypeptide: Arginine--tRNA ligase (563 aa).

Residues 121–131 (PNIAKPFSIGH) carry the 'HIGH' region motif.

The protein belongs to the class-I aminoacyl-tRNA synthetase family. Monomer.

The protein localises to the cytoplasm. The catalysed reaction is tRNA(Arg) + L-arginine + ATP = L-arginyl-tRNA(Arg) + AMP + diphosphate. This chain is Arginine--tRNA ligase, found in Streptococcus pyogenes serotype M12 (strain MGAS2096).